Here is a 166-residue protein sequence, read N- to C-terminus: NAD(P)H-quinone oxidoreductase subunit I, chloroplastic (166 aa).

4Fe-4S ferredoxin-type domains lie at 55 to 84 (GRIH…VDWK) and 95 to 124 (LNYS…MTEE). 8 residues coordinate [4Fe-4S] cluster: Cys64, Cys67, Cys70, Cys74, Cys104, Cys107, Cys110, and Cys114.

Belongs to the complex I 23 kDa subunit family. In terms of assembly, NDH is composed of at least 16 different subunits, 5 of which are encoded in the nucleus. It depends on [4Fe-4S] cluster as a cofactor.

It localises to the plastid. The protein resides in the chloroplast thylakoid membrane. The enzyme catalyses a plastoquinone + NADH + (n+1) H(+)(in) = a plastoquinol + NAD(+) + n H(+)(out). The catalysed reaction is a plastoquinone + NADPH + (n+1) H(+)(in) = a plastoquinol + NADP(+) + n H(+)(out). In terms of biological role, NDH shuttles electrons from NAD(P)H:plastoquinone, via FMN and iron-sulfur (Fe-S) centers, to quinones in the photosynthetic chain and possibly in a chloroplast respiratory chain. The immediate electron acceptor for the enzyme in this species is believed to be plastoquinone. Couples the redox reaction to proton translocation, and thus conserves the redox energy in a proton gradient. The polypeptide is NAD(P)H-quinone oxidoreductase subunit I, chloroplastic (Espeletia timotensis (Andean giant rosette)).